The primary structure comprises 548 residues: Chaperonin GroEL (548 aa).

Residues 30–33 (TLGP), lysine 51, 87–91 (DGTTT), glycine 415, 479–481 (NAA), and aspartate 495 each bind ATP.

The protein belongs to the chaperonin (HSP60) family. As to quaternary structure, forms a cylinder of 14 subunits composed of two heptameric rings stacked back-to-back. Interacts with the co-chaperonin GroES.

Its subcellular location is the cytoplasm. It carries out the reaction ATP + H2O + a folded polypeptide = ADP + phosphate + an unfolded polypeptide.. Its function is as follows. Together with its co-chaperonin GroES, plays an essential role in assisting protein folding. The GroEL-GroES system forms a nano-cage that allows encapsulation of the non-native substrate proteins and provides a physical environment optimized to promote and accelerate protein folding. This is Chaperonin GroEL from Lawsonia intracellularis (strain PHE/MN1-00).